The chain runs to 1218 residues: Coatomer subunit alpha-2 (1218 aa).

WD repeat units lie at residues 7-48 (TKSN…DRFD), 49-88 (EHEG…CLFT), 91-132 (GHLD…SVLT), 133-172 (GHNH…KKSA), 202-241 (GHDR…AWEV), 246-285 (GHMN…GIQT), 288-326 (REHD…PAFA), and 363-404 (SLNQ…VGRS). The interval 826-849 (NRGAVDEEEEDVEGDWGEGLDKFD) is disordered. The segment covering 831 to 843 (DEEEEDVEGDWGE) has biased composition (acidic residues).

Oligomeric complex that consists of at least the alpha, beta, beta', gamma, delta, epsilon and zeta subunits.

Its subcellular location is the cytoplasm. It is found in the golgi apparatus membrane. The protein resides in the cytoplasmic vesicle. It localises to the COPI-coated vesicle membrane. The coatomer is a cytosolic protein complex that binds to dilysine motifs and reversibly associates with Golgi non-clathrin-coated vesicles, which further mediate biosynthetic protein transport from the ER, via the Golgi up to the trans Golgi network. Coatomer complex is required for budding from Golgi membranes, and is essential for the retrograde Golgi-to-ER transport of dilysine-tagged proteins. The sequence is that of Coatomer subunit alpha-2 from Arabidopsis thaliana (Mouse-ear cress).